Here is a 29-residue protein sequence, read N- to C-terminus: Cytolysin Oshem 1 (29 aa).

Its subcellular location is the secreted. It is found in the nematocyst. The protein localises to the target cell membrane. Functionally, cytolysin that shows moderate hemolysis and moderate myonecrosis. This chain is Cytolysin Oshem 1, found in Olindias sambaquiensis (Hydromedusa).